The primary structure comprises 653 residues: Macrolide export ATP-binding/permease protein MacB (653 aa).

Residues 6–244 (LQLTRVTRRF…DAASGASGDA (239 aa)) enclose the ABC transporter domain. ATP is bound at residue 42–49 (GASGSGKS). 4 helical membrane passes run 278 to 298 (LLTM…VAIG), 526 to 546 (LTLL…IGVM), 587 to 607 (MGGA…SLFV), and 616 to 636 (AGSI…FGFM).

This sequence belongs to the ABC transporter superfamily. Macrolide exporter (TC 3.A.1.122) family. In terms of assembly, homodimer.

The protein localises to the cell inner membrane. Functionally, non-canonical ABC transporter that contains transmembrane domains (TMD), which form a pore in the inner membrane, and an ATP-binding domain (NBD), which is responsible for energy generation. Confers resistance against macrolides. The polypeptide is Macrolide export ATP-binding/permease protein MacB (Burkholderia thailandensis (strain ATCC 700388 / DSM 13276 / CCUG 48851 / CIP 106301 / E264)).